A 370-amino-acid polypeptide reads, in one-letter code: CST complex subunit STN1 (370 aa).

Residues 1–187 (MESNSSQCED…KVYDQPFHSP (187 aa)) are interaction with CTC1. Positions 57-157 (VDILGTVIGV…EIHATTYYKV (101 aa)) form a DNA-binding region, OB. Winged helix-turn-helix (wHTH) stretches follow at residues 193 to 297 (EALS…YVTR) and 298 to 370 (EDKE…YTAF).

The protein belongs to the STN1 family. In terms of assembly, component of the CST complex, composed of TEN1/C17orf106, CTC1/C17orf68 and STN1; in the complex interacts directly with TEN1 and CTC1. Interacts with ACD/TPP1, POT1 and POLA1.

It localises to the nucleus. The protein resides in the chromosome. Its subcellular location is the telomere. In terms of biological role, component of the CST complex proposed to act as a specialized replication factor promoting DNA replication under conditions of replication stress or natural replication barriers such as the telomere duplex. The CST complex binds single-stranded DNA with high affinity in a sequence-independent manner, while isolated subunits bind DNA with low affinity by themselves. Initially the CST complex has been proposed to protect telomeres from DNA degradation. However, the CST complex has been shown to be involved in several aspects of telomere replication. The CST complex inhibits telomerase and is involved in telomere length homeostasis; it is proposed to bind to newly telomerase-synthesized 3' overhangs and to terminate telomerase action implicating the association with the ACD:POT1 complex thus interfering with its telomerase stimulation activity. The CST complex is also proposed to be involved in fill-in synthesis of the telomeric C-strand probably implicating recruitment and activation of DNA polymerase alpha. The CST complex facilitates recovery from many forms of exogenous DNA damage; seems to be involved in the re-initiation of DNA replication at repaired forks and/or dormant origins. Required for efficicient replication of the duplex region of the telomere. Promotes efficient replication of lagging-strand telomeres. Promotes general replication start following replication-fork stalling implicating new origin firing. May be in involved in C-strand fill-in during late S/G2 phase independent of its role in telomere duplex replication. The sequence is that of CST complex subunit STN1 from Bos taurus (Bovine).